The primary structure comprises 136 residues: Small ribosomal subunit protein bS16 (136 aa).

The protein belongs to the bacterial ribosomal protein bS16 family.

The protein is Small ribosomal subunit protein bS16 of Pseudarthrobacter chlorophenolicus (strain ATCC 700700 / DSM 12829 / CIP 107037 / JCM 12360 / KCTC 9906 / NCIMB 13794 / A6) (Arthrobacter chlorophenolicus).